The sequence spans 436 residues: Trigger factor (436 aa).

The PPIase FKBP-type domain maps to 163-248; the sequence is GDQVIIDFVG…VHSVQTKVLP (86 aa).

Belongs to the FKBP-type PPIase family. Tig subfamily.

The protein resides in the cytoplasm. It catalyses the reaction [protein]-peptidylproline (omega=180) = [protein]-peptidylproline (omega=0). Its function is as follows. Involved in protein export. Acts as a chaperone by maintaining the newly synthesized protein in an open conformation. Functions as a peptidyl-prolyl cis-trans isomerase. This is Trigger factor from Hydrogenovibrio crunogenus (strain DSM 25203 / XCL-2) (Thiomicrospira crunogena).